The chain runs to 100 residues: MNLTPREKDKLLVAMAAEVARKRLARGVKLNHPEAIALITDAVVEGARDGRSVAEMMQAGAEVITRDQCMSGVAEMIHEVQVEATFPDGTKLVTVHNPIR.

This sequence belongs to the urease gamma subunit family. In terms of assembly, heterotrimer of UreA (gamma), UreB (beta) and UreC (alpha) subunits. Three heterotrimers associate to form the active enzyme.

It localises to the cytoplasm. The enzyme catalyses urea + 2 H2O + H(+) = hydrogencarbonate + 2 NH4(+). It participates in nitrogen metabolism; urea degradation; CO(2) and NH(3) from urea (urease route): step 1/1. This chain is Urease subunit gamma, found in Ruegeria sp. (strain TM1040) (Silicibacter sp.).